The chain runs to 142 residues: Universal stress protein D (142 aa).

It belongs to the universal stress protein A family.

The protein resides in the cytoplasm. Its function is as follows. Required for resistance to DNA-damaging agents. This chain is Universal stress protein D (uspD), found in Escherichia coli O157:H7.